A 452-amino-acid polypeptide reads, in one-letter code: UDP-N-acetylmuramoylalanine--D-glutamate ligase (452 aa).

115-121 (GTNGKTT) serves as a coordination point for ATP.

Belongs to the MurCDEF family.

Its subcellular location is the cytoplasm. It carries out the reaction UDP-N-acetyl-alpha-D-muramoyl-L-alanine + D-glutamate + ATP = UDP-N-acetyl-alpha-D-muramoyl-L-alanyl-D-glutamate + ADP + phosphate + H(+). Its pathway is cell wall biogenesis; peptidoglycan biosynthesis. Functionally, cell wall formation. Catalyzes the addition of glutamate to the nucleotide precursor UDP-N-acetylmuramoyl-L-alanine (UMA). The polypeptide is UDP-N-acetylmuramoylalanine--D-glutamate ligase (Citrifermentans bemidjiense (strain ATCC BAA-1014 / DSM 16622 / JCM 12645 / Bem) (Geobacter bemidjiensis)).